Consider the following 198-residue polypeptide: MELRLFVGLGNPGLQYTQTRHNAGFLAVDALAKRWQCSWVEKSRFKGYLAEGAGPGGRAILLKPTTYMNHSGQSVRAVADYFRLPPQQLLVLYDEVALPLGKIRLRPEGSAAGHNGIKSLIEHLGTNQFARLRIGIGREPPPPVLTNYVLGKFAPEEQEQLPAILDGCVEAVEAVLAKGLEKAMSIYNARSFGSPPDP.

Tyr-16 contacts tRNA. His-21 acts as the Proton acceptor in catalysis. TRNA-binding residues include Tyr-67, Asn-69, and Asn-115.

It belongs to the PTH family. In terms of assembly, monomer.

The protein resides in the cytoplasm. The catalysed reaction is an N-acyl-L-alpha-aminoacyl-tRNA + H2O = an N-acyl-L-amino acid + a tRNA + H(+). Hydrolyzes ribosome-free peptidyl-tRNAs (with 1 or more amino acids incorporated), which drop off the ribosome during protein synthesis, or as a result of ribosome stalling. In terms of biological role, catalyzes the release of premature peptidyl moieties from peptidyl-tRNA molecules trapped in stalled 50S ribosomal subunits, and thus maintains levels of free tRNAs and 50S ribosomes. The chain is Peptidyl-tRNA hydrolase from Gloeobacter violaceus (strain ATCC 29082 / PCC 7421).